A 101-amino-acid chain; its full sequence is RNA-binding protein Hfq (101 aa).

The Sm domain maps to 9-68; that stretch reads DPFLNALRRERVPVSIYLVNGIKLQGQVESFDQFVILLKNTVSQMVYKHAISTVVPSPPV. The interval 62-101 is disordered; the sequence is VVPSPPVSHHSNTPSGSTNNYHGSNPSAPQQPQQDSDDAE. Residues 70 to 86 show a composition bias toward polar residues; the sequence is HHSNTPSGSTNNYHGSN.

It belongs to the Hfq family. Homohexamer.

In terms of biological role, RNA chaperone that binds small regulatory RNA (sRNAs) and mRNAs to facilitate mRNA translational regulation in response to envelope stress, environmental stress and changes in metabolite concentrations. Also binds with high specificity to tRNAs. This Yersinia pestis (strain Pestoides F) protein is RNA-binding protein Hfq.